The sequence spans 414 residues: Esterase FrsA (414 aa).

It belongs to the FrsA family.

It catalyses the reaction a carboxylic ester + H2O = an alcohol + a carboxylate + H(+). Functionally, catalyzes the hydrolysis of esters. The chain is Esterase FrsA from Escherichia coli O157:H7.